The primary structure comprises 282 residues: BTB/POZ domain-containing protein At3g56230 (282 aa).

A compositionally biased stretch (basic and acidic residues) spans 40–50 (GSKEDRHDKSN). Residues 40-66 (GSKEDRHDKSNHNSTINNGSSISSSPL) are disordered. A compositionally biased stretch (low complexity) spans 51–64 (HNSTINNGSSISSS). One can recognise a BTB domain in the interval 111–181 (ADILLKPGDD…LYTGTLASDK (71 aa)).

It functions in the pathway protein modification; protein ubiquitination. Its function is as follows. May act as a substrate-specific adapter of an E3 ubiquitin-protein ligase complex (CUL3-RBX1-BTB) which mediates the ubiquitination and subsequent proteasomal degradation of target proteins. This chain is BTB/POZ domain-containing protein At3g56230, found in Arabidopsis thaliana (Mouse-ear cress).